We begin with the raw amino-acid sequence, 196 residues long: ATP-dependent Clp protease proteolytic subunit (196 aa).

Serine 96 (nucleophile) is an active-site residue. Residue histidine 121 is part of the active site.

This sequence belongs to the peptidase S14 family. In terms of assembly, fourteen ClpP subunits assemble into 2 heptameric rings which stack back to back to give a disk-like structure with a central cavity, resembling the structure of eukaryotic proteasomes.

It is found in the cytoplasm. The catalysed reaction is Hydrolysis of proteins to small peptides in the presence of ATP and magnesium. alpha-casein is the usual test substrate. In the absence of ATP, only oligopeptides shorter than five residues are hydrolyzed (such as succinyl-Leu-Tyr-|-NHMec, and Leu-Tyr-Leu-|-Tyr-Trp, in which cleavage of the -Tyr-|-Leu- and -Tyr-|-Trp bonds also occurs).. Cleaves peptides in various proteins in a process that requires ATP hydrolysis. Has a chymotrypsin-like activity. Plays a major role in the degradation of misfolded proteins. This Streptococcus pneumoniae (strain 70585) protein is ATP-dependent Clp protease proteolytic subunit.